Consider the following 273-residue polypeptide: DNA repair protein RecO (273 aa).

A disordered region spans residues 249–273 (GRSLTEEPELKAEQTEAEKESQRPR). The span at 252-273 (LTEEPELKAEQTEAEKESQRPR) shows a compositional bias: basic and acidic residues.

Belongs to the RecO family.

Involved in DNA repair and RecF pathway recombination. The protein is DNA repair protein RecO of Heliobacterium modesticaldum (strain ATCC 51547 / Ice1).